Consider the following 1515-residue polypeptide: Apolipophorin (1515 aa).

Positions 952–1118 constitute a VWFD domain; the sequence is LRGVVVNGQH…NSYRLASSCP (167 aa). Cysteines 976 and 1117 form a disulfide. Asn988 carries an N-linked (GlcNAc...) asparagine glycan.

In terms of tissue distribution, hemolymph.

It localises to the secreted. Its function is as follows. Mediates transport for various types of lipids in hemolymph. Acts by forming lipoprotein particles that bind lipoproteins and lipids. Binds the A.niger cell wall component alpha-1,3-glucan, a fungal pathogen-associated molecular pattern (PAMP) that activates the host immune response. This is Apolipophorin from Galleria mellonella (Greater wax moth).